The sequence spans 268 residues: Ribosomal RNA small subunit methyltransferase A (268 aa).

S-adenosyl-L-methionine-binding residues include N18, L20, G45, E66, D91, and N112.

Belongs to the class I-like SAM-binding methyltransferase superfamily. rRNA adenine N(6)-methyltransferase family. RsmA subfamily.

It is found in the cytoplasm. The catalysed reaction is adenosine(1518)/adenosine(1519) in 16S rRNA + 4 S-adenosyl-L-methionine = N(6)-dimethyladenosine(1518)/N(6)-dimethyladenosine(1519) in 16S rRNA + 4 S-adenosyl-L-homocysteine + 4 H(+). In terms of biological role, specifically dimethylates two adjacent adenosines (A1518 and A1519) in the loop of a conserved hairpin near the 3'-end of 16S rRNA in the 30S particle. May play a critical role in biogenesis of 30S subunits. In Shewanella frigidimarina (strain NCIMB 400), this protein is Ribosomal RNA small subunit methyltransferase A.